A 493-amino-acid chain; its full sequence is Telomere-binding protein subunit alpha (493 aa).

The interval 1-30 is disordered; sequence MSSAKRSTSRVSKKKAAPAKDGAPKKREQS. Positions 7-17 are enriched in basic residues; the sequence is STSRVSKKKAA.

Belongs to the telombin family. As to quaternary structure, heterodimer of an alpha and a beta subunit.

The protein localises to the nucleus. The protein resides in the chromosome. It localises to the telomere. Its function is as follows. May function as protective capping of the single-stranded telomeric overhang. May also participate in telomere length regulation during DNA replication. This Stylonychia mytilus (Ciliate) protein is Telomere-binding protein subunit alpha (STY56V).